A 332-amino-acid chain; its full sequence is MATGSRESSFSSCASSCDFDDEGVRGTCEDASLCKRFAVSIGHWHDPYIEHLVRQSKERKAPEINRGYFARVHGVSQLIKAFLRKTECRCQILNLGAGMDTTFWKLKDEGLLPNKYFEVDFPMIVTRKLHTIKNKPLLFRPIMELHPEDTLQIDSHMLDSKRYAIIGADLRDLSELEEKLKKCNMNTQLPTLLITECVLVYMTPEQSANLLKWAARSFETAMFINYEQVNMDDRFGQIMIENLRRRQCDLAGVETCKSLESQKERLLLNGWETASAVNMMELYSGLPRAEVNRIESLEFLDEMELLEQLMRHYCLCWATRGGQELGLKEITY.

Residues R71, G96, D120, 169–170 (DL), and E196 each bind S-adenosyl-L-methionine.

The protein belongs to the methyltransferase superfamily. LCMT family.

It catalyses the reaction [phosphatase 2A protein]-C-terminal L-leucine + S-adenosyl-L-methionine = [phosphatase 2A protein]-C-terminal L-leucine methyl ester + S-adenosyl-L-homocysteine. Functionally, methylates the carboxyl group of the C-terminal leucine residue of protein phosphatase 2A catalytic subunits to form alpha-leucine ester residues. This chain is Leucine carboxyl methyltransferase 1 (Lcmt1), found in Rattus norvegicus (Rat).